The sequence spans 166 residues: Interferon gamma (166 aa).

The first 23 residues, 1 to 23 (MKYTSYILAFQLCIILGSSSCYS), serve as a signal peptide directing secretion. Q24 bears the Pyrrolidone carboxylic acid mark. Residues N39, N44, and N106 are each glycosylated (N-linked (GlcNAc...) asparagine).

This sequence belongs to the type II (or gamma) interferon family. As to quaternary structure, homodimer. As to expression, released primarily from activated T lymphocytes.

It is found in the secreted. Produced by lymphocytes activated by specific antigens or mitogens. IFN-gamma, in addition to having antiviral activity, has important immunoregulatory functions. It is a potent activator of macrophages, it has antiproliferative effects on transformed cells and it can potentiate the antiviral and antitumor effects of the type I interferons. The polypeptide is Interferon gamma (IFNG) (Marmota monax (Woodchuck)).